A 590-amino-acid chain; its full sequence is Potassium-transporting ATPase potassium-binding subunit (590 aa).

The next 10 membrane-spanning stretches (helical) occupy residues 11–31 (IFIAAVLLGAKPLGVYMAAVF), 64–84 (TAYCASMLIFSAATMLLTYLI), 136–156 (GLATHNFWSAAVGIALAIAFI), 178–198 (ILWVLLPICVVFALVLTSQGV), 273–293 (MLEMISIFLIPAGLTVTLGQM), 301–321 (WAVLGAMLILWFAGVATCYWA), 403–423 (AGLYGMLVFVIVAVFIAGLMV), 442–462 (AMLYLLIFPLIILGFSAVAVL), 511–531 (LGFAMFIGRFLMIVPMLALAG), and 552–572 (LFTVLLTSVIIVVGALTFLPA).

Belongs to the KdpA family. As to quaternary structure, the system is composed of three essential subunits: KdpA, KdpB and KdpC.

It localises to the cell inner membrane. Part of the high-affinity ATP-driven potassium transport (or Kdp) system, which catalyzes the hydrolysis of ATP coupled with the electrogenic transport of potassium into the cytoplasm. This subunit binds the periplasmic potassium ions and delivers the ions to the membrane domain of KdpB through an intramembrane tunnel. This Acidobacterium capsulatum (strain ATCC 51196 / DSM 11244 / BCRC 80197 / JCM 7670 / NBRC 15755 / NCIMB 13165 / 161) protein is Potassium-transporting ATPase potassium-binding subunit.